Consider the following 353-residue polypeptide: MEIDLGANAFGIDFHPSTNLVAAGLIDGHLHLYRYDSDSSLVRERKVRAHKESCRAVRFIDDGQRIVTASADCSILATDVETGAQVAHLENAHEDAVNTLINVTETTIASGDDKGCVKIWDTRQRSCSHEFNAHEDYISGMTFASDSMKLVVTSGDGTLSVCNLRTSKVQSQSEFSEDELLSVVIMKNGRKVICGTQNGTLLLYSWGFFKDCSDRFVDLAPNSVDALLKLDEDRLITGCDNGIISLVGILPNRIIQPIGSHDYPIEDLALSHDKKFLGSTAHDSMLKLWNLEEILEGSNVNSGNASGAAEDSDSDNDGMDLDNDPSKSSKGSKRKTKSKANTLNATNNFFADL.

WD repeat units lie at residues 4–43 (DLGANAFGIDFHPSTNLVAAGLIDGHLHLYRYDSDSSLVR), 49–88 (AHKESCRAVRFIDDGQRIVTASADCSILATDVETGAQVAH), 92–130 (AHEDAVNTLINVTETTIASGDDKGCVKIWDTRQRSCSHE), 133–172 (AHEDYISGMTFASDSMKLVVTSGDGTLSVCNLRTSKVQSQ), 175–214 (FSEDELLSVVIMKNGRKVICGTQNGTLLLYSWGFFKDCSD), 218–257 (DLAPNSVDALLKLDEDRLITGCDNGIISLVGILPNRIIQP), and 260–299 (SHDYPIEDLALSHDKKFLGSTAHDSMLKLWNLEEILEGSN). The segment at 300 to 353 (VNSGNASGAAEDSDSDNDGMDLDNDPSKSSKGSKRKTKSKANTLNATNNFFADL) is disordered. Residues 310 to 323 (EDSDSDNDGMDLDN) show a composition bias toward acidic residues. Positions 339-353 (KANTLNATNNFFADL) are enriched in low complexity.

This sequence belongs to the WD repeat WDR55 family. Interacts with DDB1A. In terms of tissue distribution, highly expressed in roots. Expressed in cotyledons, leaves, buds and flowers.

It localises to the nucleus. Its subcellular location is the cytoplasm. In terms of biological role, required for male and female gametogenesis, seed development, and embryo and endosperm development at early stages. Involved in the establishment of bilateral symmetry in the transition from the globular to the heart embryo stage. May act in the frame of a CRL4 complex. Required for proper vegetative growth and organization of the adult plant body. May play a role in hormonal control of plant development. This chain is WD repeat-containing protein 55, found in Arabidopsis thaliana (Mouse-ear cress).